The sequence spans 240 residues: tRNA pseudouridine synthase B (240 aa).

Asp-54 (nucleophile) is an active-site residue.

The protein belongs to the pseudouridine synthase TruB family. Type 1 subfamily.

The catalysed reaction is uridine(55) in tRNA = pseudouridine(55) in tRNA. Functionally, responsible for synthesis of pseudouridine from uracil-55 in the psi GC loop of transfer RNAs. This is tRNA pseudouridine synthase B from Chlorobium phaeovibrioides (strain DSM 265 / 1930) (Prosthecochloris vibrioformis (strain DSM 265)).